The sequence spans 209 residues: Large ribosomal subunit protein uL4 (209 aa).

The interval 45 to 80 (RQGTHKAKERSELSGSTRKLIRQKGSGGARRGDINS) is disordered.

This sequence belongs to the universal ribosomal protein uL4 family. In terms of assembly, part of the 50S ribosomal subunit.

Functionally, one of the primary rRNA binding proteins, this protein initially binds near the 5'-end of the 23S rRNA. It is important during the early stages of 50S assembly. It makes multiple contacts with different domains of the 23S rRNA in the assembled 50S subunit and ribosome. Forms part of the polypeptide exit tunnel. The sequence is that of Large ribosomal subunit protein uL4 from Porphyromonas gingivalis (strain ATCC BAA-308 / W83).